Reading from the N-terminus, the 115-residue chain is Large ribosomal subunit protein bL19 (115 aa).

Belongs to the bacterial ribosomal protein bL19 family.

Functionally, this protein is located at the 30S-50S ribosomal subunit interface and may play a role in the structure and function of the aminoacyl-tRNA binding site. In Streptococcus suis (strain 98HAH33), this protein is Large ribosomal subunit protein bL19.